The chain runs to 250 residues: Probable xyloglucan-specific endo-beta-1,4-glucanase A (250 aa).

Residues 1–19 (MKLSVLSLASLASAAALNA) form the signal peptide. N72 is a glycosylation site (N-linked (GlcNAc...) asparagine).

The protein belongs to the glycosyl hydrolase 12 (cellulase H) family.

It is found in the secreted. It carries out the reaction xyloglucan + H2O = xyloglucan oligosaccharides.. Functionally, catalyzes endohydrolysis of 1,4-beta-D-glucosidic linkages in xyloglucan with retention of the beta-configuration of the glycosyl residues. Specific for xyloglucan and does not hydrolyze other cell wall components. This is Probable xyloglucan-specific endo-beta-1,4-glucanase A (xgeA) from Aspergillus terreus (strain NIH 2624 / FGSC A1156).